The chain runs to 634 residues: DNA-directed RNA polymerase subunit gamma (634 aa).

Zn(2+)-binding residues include Cys-74, Cys-76, Cys-89, and Cys-92. Mg(2+) is bound by residues Asp-471, Asp-473, and Asp-475.

Belongs to the RNA polymerase beta' chain family. RpoC1 subfamily. In terms of assembly, in cyanobacteria the RNAP catalytic core is composed of 2 alpha, 1 beta, 1 beta', 1 gamma and 1 omega subunit. When a sigma factor is associated with the core the holoenzyme is formed, which can initiate transcription. Mg(2+) serves as cofactor. The cofactor is Zn(2+).

It carries out the reaction RNA(n) + a ribonucleoside 5'-triphosphate = RNA(n+1) + diphosphate. Functionally, DNA-dependent RNA polymerase catalyzes the transcription of DNA into RNA using the four ribonucleoside triphosphates as substrates. This chain is DNA-directed RNA polymerase subunit gamma, found in Prochlorococcus marinus (strain AS9601).